The chain runs to 176 residues: ATP-dependent protease subunit HslV (176 aa).

The active site involves Thr5. Na(+)-binding residues include Ala161, Cys164, and Thr167.

The protein belongs to the peptidase T1B family. HslV subfamily. As to quaternary structure, a double ring-shaped homohexamer of HslV is capped on each side by a ring-shaped HslU homohexamer. The assembly of the HslU/HslV complex is dependent on binding of ATP.

The protein resides in the cytoplasm. The enzyme catalyses ATP-dependent cleavage of peptide bonds with broad specificity.. Its activity is regulated as follows. Allosterically activated by HslU binding. In terms of biological role, protease subunit of a proteasome-like degradation complex believed to be a general protein degrading machinery. This chain is ATP-dependent protease subunit HslV, found in Pelotomaculum thermopropionicum (strain DSM 13744 / JCM 10971 / SI).